Here is a 443-residue protein sequence, read N- to C-terminus: Probable D-serine dehydratase (443 aa).

N6-(pyridoxal phosphate)lysine is present on lysine 118.

This sequence belongs to the serine/threonine dehydratase family. DsdA subfamily. Pyridoxal 5'-phosphate serves as cofactor.

The catalysed reaction is D-serine = pyruvate + NH4(+). The protein is Probable D-serine dehydratase of Aeromonas hydrophila subsp. hydrophila (strain ATCC 7966 / DSM 30187 / BCRC 13018 / CCUG 14551 / JCM 1027 / KCTC 2358 / NCIMB 9240 / NCTC 8049).